Reading from the N-terminus, the 208-residue chain is 2-phospho-L-lactate guanylyltransferase (208 aa).

The protein belongs to the CofC family. As to quaternary structure, homodimer.

It carries out the reaction (2S)-2-phospholactate + GTP + H(+) = (2S)-lactyl-2-diphospho-5'-guanosine + diphosphate. Its pathway is cofactor biosynthesis; coenzyme F420 biosynthesis. Guanylyltransferase that catalyzes the activation of (2S)-2-phospholactate (2-PL) as (2S)-lactyl-2-diphospho-5'-guanosine, via the condensation of 2-PL with GTP. It is involved in the biosynthesis of coenzyme F420, a hydride carrier cofactor. This chain is 2-phospho-L-lactate guanylyltransferase, found in Haloarcula marismortui (strain ATCC 43049 / DSM 3752 / JCM 8966 / VKM B-1809) (Halobacterium marismortui).